Reading from the N-terminus, the 249-residue chain is AAGTIQTSVNDVGSKTHLTCSLNSSGVDIIGHRWMRGGKILQEDTLPDLQTQYTVDIDDRSGDYACIFLPEPVGRSNIVVEGPPRIKVGKKSEHSSEGENVRLICKSESSHPPVTEWSWFKTSDSGDQLITNSSESKYVVISTADRSELTISNLDINSDPGTYMCNATNTQGSVQEIMTLRVRSRLAALWPFLGIVAEVLVLVTIIFIYEKRRKPDQTLDEDDPGAAPLKGSGHHMNDKDKNVRQRNAT.

In terms of domain architecture, Ig-like C2-type spans 1-82 (AAGTIQTSVN…VGRSNIVVEG (82 aa)). Residues 1–187 (AAGTIQTSVN…MTLRVRSRLA (187 aa)) lie on the Extracellular side of the membrane. 2 disulfides stabilise this stretch: C20/C66 and C105/C165. 3 N-linked (GlcNAc...) asparagine glycosylation sites follow: N23, N132, and N166. The Ig-like V-type domain occupies 84–179 (PRIKVGKKSE…TQGSVQEIMT (96 aa)). A helical membrane pass occupies residues 188-208 (ALWPFLGIVAEVLVLVTIIFI). Residues 209-249 (YEKRRKPDQTLDEDDPGAAPLKGSGHHMNDKDKNVRQRNAT) are Cytoplasmic-facing. Residues 216-249 (DQTLDEDDPGAAPLKGSGHHMNDKDKNVRQRNAT) are disordered. T218 bears the Phosphothreonine mark. S232 bears the Phosphoserine mark.

Homooligomer. Interacts with VEGFA, KDR/VEGFR2, PPIA/CYPA, SLC16A12, SLC16A11, ATP1B2, MAG, L1CAM and AJAP1. Interacts with SLC16A3; interaction mediates SLC16A3 targeting to the plasma membrane. Interacts with SLC16A1; interaction mediates SLC16A1 targeting to the plasma membrane. Interacts with PPIL2; regulates BSG transport to the cell membrane. Interacts with XKR8; promoting its localization at the cell membrane. Interacts with SLC16A6; this interaction mediates targeting to the plasma membrane.

The protein resides in the cell membrane. The protein localises to the endoplasmic reticulum membrane. Its subcellular location is the basolateral cell membrane. Functionally, signaling receptor for cyclophilins, essential for PPIA/CYPA and PPIB/CYPB-dependent signaling related to chemotaxis and adhesion of immune cells. Plays an important role in targeting the monocarboxylate transporters SLC16A1/GLUT1, SLC16A3, SLC16A8, SLC16A11 and SLC16A12 to the plasma membrane. Acts as a coreceptor for vascular endothelial growth factor receptor 2 (KDR/VEGFR2) in endothelial cells enhancing its VEGFA-mediated activation and downstream signaling. Promotes angiogenesis through EPAS1/HIF2A-mediated up-regulation of VEGFA and KDR/VEGFR2 in endothelial cells. This Cricetulus griseus (Chinese hamster) protein is Basigin (BSG).